Reading from the N-terminus, the 468-residue chain is MSNGKITQVIGPVIDVEFEAGELPEIYYALKVSNPSLGDEPWNLVAEVAQHLGENTVRAIAMDSTDGLVRGQEVLNTGRQISVPVGRGTLGRILNVIGEPVDEQGPVETDTTWEIHRPTPEFVDQSTKVEAFETGIKVVDLLAPYARGGKIGLFGGAGVGKTVLIMELIHNIAKKHGGFSVFAGVGERTREGNDLWNEMKESNVLDKTALVYGQMNEPPGARARVALSALTVAEYFRDQENQDVLLFVDNIFRFTQAGSEVSALLGRIPSAVGYQPTLSTEMGELQERITTTKNGSITSVQAIYVPADDLTDPAPATTFAHLDATTVLSRQIAELGIYPAVDPLDSSSRILDPQVLGEEHYQVARDVQYVLQRYKDLQDIIAILGMDELSEEDKQTVSRARKIQRFLSQPFHVAEIFTGTPGKYVELSETIRGFKEIVEGKHDSVPEQAFYMAGGIDEVLENAAKMAS.

155 to 162 (GGAGVGKT) is a binding site for ATP.

Belongs to the ATPase alpha/beta chains family. In terms of assembly, F-type ATPases have 2 components, CF(1) - the catalytic core - and CF(0) - the membrane proton channel. CF(1) has five subunits: alpha(3), beta(3), gamma(1), delta(1), epsilon(1). CF(0) has three main subunits: a(1), b(2) and c(9-12). The alpha and beta chains form an alternating ring which encloses part of the gamma chain. CF(1) is attached to CF(0) by a central stalk formed by the gamma and epsilon chains, while a peripheral stalk is formed by the delta and b chains.

It is found in the cell inner membrane. It catalyses the reaction ATP + H2O + 4 H(+)(in) = ADP + phosphate + 5 H(+)(out). Produces ATP from ADP in the presence of a proton gradient across the membrane. The catalytic sites are hosted primarily by the beta subunits. This chain is ATP synthase subunit beta 1, found in Syntrophotalea carbinolica (strain DSM 2380 / NBRC 103641 / GraBd1) (Pelobacter carbinolicus).